A 273-amino-acid chain; its full sequence is UPF0380 protein YafZ (273 aa).

It belongs to the UPF0380 family.

This chain is UPF0380 protein YafZ (yafZ), found in Escherichia coli (strain K12).